The primary structure comprises 182 residues: UPF0397 protein VV2_1534 (182 aa).

5 helical membrane-spanning segments follow: residues 8–28 (VVVIAIGAALYGIGGLPMFGI), 41–61 (AVLALFSVLFGPLVGFLVGFI), 72–92 (WGVWLTWVLGSGIVGLIIGLF), 110–130 (FSLFVVLALLGNVFGYGCSAF), and 146–166 (QLTIIASGNTVLIAIVGYFIL).

It belongs to the UPF0397 family.

It localises to the cell membrane. This Vibrio vulnificus (strain CMCP6) protein is UPF0397 protein VV2_1534.